A 152-amino-acid chain; its full sequence is Leukocyte-associated immunoglobulin-like receptor 2 (152 aa).

An N-terminal signal peptide occupies residues 1–21 (MSPHLTALLGLVLCLAQTIHT). The region spanning 29-117 (PSISAEPGTV…GWSEHSDFLE (89 aa)) is the Ig-like C2-type domain. The cysteines at positions 49 and 101 are disulfide-linked. The interval 120 to 152 (VKESSGGPDSPDTEPGSSAGTVPGTEASGFDAP) is disordered.

The protein resides in the secreted. This is Leukocyte-associated immunoglobulin-like receptor 2 (LAIR2) from Homo sapiens (Human).